The sequence spans 418 residues: Tyrosine--tRNA ligase (418 aa).

An L-tyrosine-binding site is contributed by Y34. Positions 39 to 48 match the 'HIGH' region motif; that stretch reads PTADSLHLGH. Residues Y169 and Q173 each contribute to the L-tyrosine site. Positions 229-233 match the 'KMSKS' region motif; it reads KFGKS. Residue K232 participates in ATP binding. Residues 352–418 enclose the S4 RNA-binding domain; the sequence is LNIVDLLVTA…GKKKYFVLTY (67 aa).

The protein belongs to the class-I aminoacyl-tRNA synthetase family. TyrS type 1 subfamily. As to quaternary structure, homodimer.

Its subcellular location is the cytoplasm. The catalysed reaction is tRNA(Tyr) + L-tyrosine + ATP = L-tyrosyl-tRNA(Tyr) + AMP + diphosphate + H(+). Catalyzes the attachment of tyrosine to tRNA(Tyr) in a two-step reaction: tyrosine is first activated by ATP to form Tyr-AMP and then transferred to the acceptor end of tRNA(Tyr). The chain is Tyrosine--tRNA ligase from Streptococcus gordonii (strain Challis / ATCC 35105 / BCRC 15272 / CH1 / DL1 / V288).